Here is a 414-residue protein sequence, read N- to C-terminus: Tyrosine--tRNA ligase (414 aa).

Y38 lines the L-tyrosine pocket. The short motif at 43 to 52 (PTATSLHLGN) is the 'HIGH' region element. Y165 and Q169 together coordinate L-tyrosine. The 'KMSKS' region motif lies at 228–232 (KFGKS). K231 is an ATP binding site. The S4 RNA-binding domain maps to 349-414 (FNANQIIDLG…KKYFFIIELI (66 aa)).

Belongs to the class-I aminoacyl-tRNA synthetase family. TyrS type 1 subfamily. Homodimer.

The protein resides in the cytoplasm. It carries out the reaction tRNA(Tyr) + L-tyrosine + ATP = L-tyrosyl-tRNA(Tyr) + AMP + diphosphate + H(+). Its function is as follows. Catalyzes the attachment of tyrosine to tRNA(Tyr) in a two-step reaction: tyrosine is first activated by ATP to form Tyr-AMP and then transferred to the acceptor end of tRNA(Tyr). The protein is Tyrosine--tRNA ligase of Mesomycoplasma hyopneumoniae (strain 232) (Mycoplasma hyopneumoniae).